Consider the following 174-residue polypeptide: MKDLTMLLDELKDMSFFNKGDICLIGCSTSEVIGEKIGTVGSMEVAETIFNALDVVSKETGVTFAFQGCEHINRAITIEKSQFNPLTMEEVSVVPDVHAGGSLATYAFQHMKDPIVVEHITVPCGIDIGQTLIGMHIKHVCVPVRTSVKQVGQAIVTIATSRPKKIGGERAKYQ.

It belongs to the UPF0340 family.

The polypeptide is UPF0340 protein SAB1998c (Staphylococcus aureus (strain bovine RF122 / ET3-1)).